Consider the following 319-residue polypeptide: Bidirectional sugar transporter SWEET15 (319 aa).

The Extracellular portion of the chain corresponds to 1–10; that stretch reads MAFMSMERST. Residues 11–31 form a helical membrane-spanning segment; that stretch reads WAFTFGILGNLISLMVFLSPL. The 87-residue stretch at 13–99 folds into the MtN3/slv 1 domain; the sequence is FTFGILGNLI…AMYLAYAPKS (87 aa). The Cytoplasmic segment spans residues 32–50; sequence PTFYRVYRKKSTEGFQSTP. The chain crosses the membrane as a helical span at residues 51 to 71; that stretch reads YVVTLFSCMLWMYYAFVKSGA. Glu-72 is a topological domain (extracellular). The helical transmembrane segment at 73–93 threads the bilayer; that stretch reads LLVTINGVGCVIETVYLAMYL. The Cytoplasmic segment spans residues 94 to 106; that stretch reads AYAPKSARMLTAK. The chain crosses the membrane as a helical span at residues 107–127; it reads MLLGLNIGLFGVIALVTLLLS. Residues 128–134 lie on the Extracellular side of the membrane; the sequence is RGELRVH. The helical transmembrane segment at 135–155 threads the bilayer; that stretch reads VLGWICVAVSLSVFAAPLSII. The MtN3/slv 2 domain maps to 135-219; the sequence is VLGWICVAVS…ALYMAYRSKK (85 aa). The Cytoplasmic segment spans residues 156–167; it reads RLVIRTKSVEFM. Residues 168–188 traverse the membrane as a helical segment; it reads PFSLSFFLVLSAVIWFLYGLL. Residues 189 to 191 lie on the Extracellular side of the membrane; the sequence is KKD. Residues 192–212 form a helical membrane-spanning segment; the sequence is VFVALPNVLGFVFGVAQMALY. The Cytoplasmic portion of the chain corresponds to 213–319; that stretch reads MAYRSKKPLV…KPDMAIVVEV (107 aa).

This sequence belongs to the SWEET sugar transporter family. Forms homooligomers and/or heterooligomers.

Its subcellular location is the cell membrane. In terms of biological role, mediates both low-affinity uptake and efflux of sugar across the plasma membrane. Its function is as follows. Confers blight susceptibility. Confers TAL effector-mediated susceptibility to Xanthomonas oryzae pv. oryzae. The chain is Bidirectional sugar transporter SWEET15 (SWEET15) from Oryza sativa subsp. japonica (Rice).